We begin with the raw amino-acid sequence, 104 residues long: SPbeta prophage-derived stress response protein SCP1 (104 aa).

Its subcellular location is the cytoplasm. The chain is SPbeta prophage-derived stress response protein SCP1 (yorD) from Bacillus subtilis (strain 168).